A 72-amino-acid chain; its full sequence is Cell division protein ZapB (72 aa).

Residues 3-71 (LSIIDQLEEK…LRSLLGQIDN (69 aa)) are a coiled coil.

The protein belongs to the ZapB family. As to quaternary structure, homodimer. The ends of the coiled-coil dimer bind to each other, forming polymers. Interacts with FtsZ.

The protein localises to the cytoplasm. Its function is as follows. Non-essential, abundant cell division factor that is required for proper Z-ring formation. It is recruited early to the divisome by direct interaction with FtsZ, stimulating Z-ring assembly and thereby promoting cell division earlier in the cell cycle. Its recruitment to the Z-ring requires functional FtsA or ZipA. The protein is Cell division protein ZapB of Haemophilus ducreyi (strain 35000HP / ATCC 700724).